We begin with the raw amino-acid sequence, 652 residues long: DNA ligase (652 aa).

NAD(+)-binding positions include 29 to 33, 78 to 79, and Glu-107; these read DSQYD and SL. The active-site N6-AMP-lysine intermediate is the Lys-109. Arg-130, Glu-164, Lys-278, and Lys-302 together coordinate NAD(+). Zn(2+)-binding residues include Cys-395, Cys-398, Cys-413, and Cys-418. In terms of domain architecture, BRCT spans 577 to 652; the sequence is STDAQLSGLT…IQDEDWLLNL (76 aa).

It belongs to the NAD-dependent DNA ligase family. LigA subfamily. Mg(2+) is required as a cofactor. Requires Mn(2+) as cofactor.

It carries out the reaction NAD(+) + (deoxyribonucleotide)n-3'-hydroxyl + 5'-phospho-(deoxyribonucleotide)m = (deoxyribonucleotide)n+m + AMP + beta-nicotinamide D-nucleotide.. In terms of biological role, DNA ligase that catalyzes the formation of phosphodiester linkages between 5'-phosphoryl and 3'-hydroxyl groups in double-stranded DNA using NAD as a coenzyme and as the energy source for the reaction. It is essential for DNA replication and repair of damaged DNA. The protein is DNA ligase of Streptococcus agalactiae serotype III (strain NEM316).